We begin with the raw amino-acid sequence, 656 residues long: DNA mismatch repair protein MutL (656 aa).

Belongs to the DNA mismatch repair MutL/HexB family.

In terms of biological role, this protein is involved in the repair of mismatches in DNA. It is required for dam-dependent methyl-directed DNA mismatch repair. May act as a 'molecular matchmaker', a protein that promotes the formation of a stable complex between two or more DNA-binding proteins in an ATP-dependent manner without itself being part of a final effector complex. This Lactococcus lactis subsp. lactis (strain IL1403) (Streptococcus lactis) protein is DNA mismatch repair protein MutL.